The primary structure comprises 429 residues: Enolase (429 aa).

Gln-163 contributes to the (2R)-2-phosphoglycerate binding site. The Proton donor role is filled by Glu-205. Residues Asp-242, Glu-286, and Asp-313 each coordinate Mg(2+). (2R)-2-phosphoglycerate-binding residues include Lys-338, Arg-367, Ser-368, and Lys-389. Lys-338 acts as the Proton acceptor in catalysis.

It belongs to the enolase family. Mg(2+) is required as a cofactor.

It is found in the cytoplasm. The protein localises to the secreted. The protein resides in the cell surface. The catalysed reaction is (2R)-2-phosphoglycerate = phosphoenolpyruvate + H2O. Its pathway is carbohydrate degradation; glycolysis; pyruvate from D-glyceraldehyde 3-phosphate: step 4/5. Catalyzes the reversible conversion of 2-phosphoglycerate (2-PG) into phosphoenolpyruvate (PEP). It is essential for the degradation of carbohydrates via glycolysis. In Pelobacter propionicus (strain DSM 2379 / NBRC 103807 / OttBd1), this protein is Enolase.